The sequence spans 598 residues: Jacalin-related lectin 17 (598 aa).

The segment at 1–23 (MAQRLEAEGNKNFKGKSKWDDGS) is disordered. 4 Jacalin-type lectin domains span residues 2 to 148 (AQRL…YVTW), 151 to 293 (PTKL…YFTT), 295 to 445 (PFTK…HFCP), and 452 to 595 (GEKV…HVLP).

Belongs to the jacalin lectin family.

This chain is Jacalin-related lectin 17 (JAL17), found in Arabidopsis thaliana (Mouse-ear cress).